The sequence spans 568 residues: Transport inhibitor response 1-like protein Os11g0515500 (568 aa).

The F-box domain maps to 1 to 45 (MVFFPEEVVEHILGFLASHRDRNAVSLVCREWYRVERLSRRSVLV). Residues K69, 103–104 (KR), and R335 each bind 1D-myo-inositol hexakisphosphate. Positions 338-343 (PANANA) are interaction with auxin-responsive proteins. 390 to 392 (SFR) lines the 1D-myo-inositol hexakisphosphate pocket. The tract at residues 394 to 398 (CVLDP) is interaction with auxin-responsive proteins. R425 is a binding site for 1D-myo-inositol hexakisphosphate. An interaction with auxin-responsive proteins region spans residues 453-454 (AF). Residues 473–474 (KK) and R498 each bind 1D-myo-inositol hexakisphosphate.

In terms of assembly, part of a SCF (SKP1-cullin-F-box) protein ligase complex. May interact with auxin and auxin-responsive proteins.

The protein resides in the nucleus. It participates in protein modification; protein ubiquitination. This Oryza sativa subsp. japonica (Rice) protein is Transport inhibitor response 1-like protein Os11g0515500.